The sequence spans 135 residues: Holo-[acyl-carrier-protein] synthase (135 aa).

D8 and E58 together coordinate Mg(2+).

Belongs to the P-Pant transferase superfamily. AcpS family. Mg(2+) is required as a cofactor.

It is found in the cytoplasm. The enzyme catalyses apo-[ACP] + CoA = holo-[ACP] + adenosine 3',5'-bisphosphate + H(+). Functionally, transfers the 4'-phosphopantetheine moiety from coenzyme A to a Ser of acyl-carrier-protein. The polypeptide is Holo-[acyl-carrier-protein] synthase (Ligilactobacillus salivarius (strain UCC118) (Lactobacillus salivarius)).